Here is a 262-residue protein sequence, read N- to C-terminus: Cytochrome c oxidase subunit 3 (262 aa).

6 consecutive transmembrane segments (helical) span residues Tyr-39–Trp-59, Gly-83–Phe-103, Val-120–Ala-140, Gly-163–Ile-183, Ala-201–Leu-221, and Ala-240–Trp-260.

Belongs to the cytochrome c oxidase subunit 3 family. In terms of assembly, component of the cytochrome c oxidase (complex IV, CIV), a multisubunit enzyme composed of a catalytic core of 3 subunits and several supernumerary subunits. The complex exists as a monomer or a dimer and forms supercomplexes (SCs) in the inner mitochondrial membrane with ubiquinol-cytochrome c oxidoreductase (cytochrome b-c1 complex, complex III, CIII).

It is found in the mitochondrion inner membrane. The catalysed reaction is 4 Fe(II)-[cytochrome c] + O2 + 8 H(+)(in) = 4 Fe(III)-[cytochrome c] + 2 H2O + 4 H(+)(out). Functionally, component of the cytochrome c oxidase, the last enzyme in the mitochondrial electron transport chain which drives oxidative phosphorylation. The respiratory chain contains 3 multisubunit complexes succinate dehydrogenase (complex II, CII), ubiquinol-cytochrome c oxidoreductase (cytochrome b-c1 complex, complex III, CIII) and cytochrome c oxidase (complex IV, CIV), that cooperate to transfer electrons derived from NADH and succinate to molecular oxygen, creating an electrochemical gradient over the inner membrane that drives transmembrane transport and the ATP synthase. Cytochrome c oxidase is the component of the respiratory chain that catalyzes the reduction of oxygen to water. Electrons originating from reduced cytochrome c in the intermembrane space (IMS) are transferred via the dinuclear copper A center (CU(A)) of subunit 2 and heme A of subunit 1 to the active site in subunit 1, a binuclear center (BNC) formed by heme A3 and copper B (CU(B)). The BNC reduces molecular oxygen to 2 water molecules using 4 electrons from cytochrome c in the IMS and 4 protons from the mitochondrial matrix. In Anopheles gambiae (African malaria mosquito), this protein is Cytochrome c oxidase subunit 3 (COIII).